A 185-amino-acid polypeptide reads, in one-letter code: HTH-type transcriptional regulator SAB2452 (185 aa).

The region spanning 6–66 (IENRQRIEEI…YVIQRDLNTF (61 aa)) is the HTH tetR-type domain. The H-T-H motif DNA-binding region spans 29-48 (SMNRIAKELGIGMGTLYRHF).

This Staphylococcus aureus (strain bovine RF122 / ET3-1) protein is HTH-type transcriptional regulator SAB2452.